Here is a 187-residue protein sequence, read N- to C-terminus: Pyridoxal 5'-phosphate synthase subunit PdxT (187 aa).

47–49 (GES) contributes to the L-glutamine binding site. The Nucleophile role is filled by Cys-76. L-glutamine is bound by residues Arg-102 and 128–129 (IR). Active-site charge relay system residues include His-165 and Glu-167.

This sequence belongs to the glutaminase PdxT/SNO family. As to quaternary structure, in the presence of PdxS, forms a dodecamer of heterodimers. Only shows activity in the heterodimer.

The catalysed reaction is aldehydo-D-ribose 5-phosphate + D-glyceraldehyde 3-phosphate + L-glutamine = pyridoxal 5'-phosphate + L-glutamate + phosphate + 3 H2O + H(+). The enzyme catalyses L-glutamine + H2O = L-glutamate + NH4(+). It participates in cofactor biosynthesis; pyridoxal 5'-phosphate biosynthesis. Functionally, catalyzes the hydrolysis of glutamine to glutamate and ammonia as part of the biosynthesis of pyridoxal 5'-phosphate. The resulting ammonia molecule is channeled to the active site of PdxS. In Methanococcus vannielii (strain ATCC 35089 / DSM 1224 / JCM 13029 / OCM 148 / SB), this protein is Pyridoxal 5'-phosphate synthase subunit PdxT.